Here is a 448-residue protein sequence, read N- to C-terminus: UPF0210 protein PAE3581 (448 aa).

This sequence belongs to the UPF0210 family.

The protein is UPF0210 protein PAE3581 of Pyrobaculum aerophilum (strain ATCC 51768 / DSM 7523 / JCM 9630 / CIP 104966 / NBRC 100827 / IM2).